Here is a 298-residue protein sequence, read N- to C-terminus: Leucine-rich repeat-containing protein 38 (298 aa).

Positions 1–31 are cleaved as a signal peptide; sequence MSLCVAPRHPTGAAAALGLGSLLVLLGPGRA. 2 disulfide bridges follow: cysteine 32–cysteine 38 and cysteine 36–cysteine 46. An LRRNT domain is found at 32-60; that stretch reads CPAGCACTDPHTVDCRDRGLPSVPDPFPL. The Extracellular portion of the chain corresponds to 32 to 251; that stretch reads CPAGCACTDP…ECKFSLSLTD (220 aa). LRR repeat units lie at residues 61-82, 85-106, 109-130, 133-154, and 157-177; these read DVRK…FFIF, DLVY…TFSG, KLAF…AFRS, RLVK…AFES, and SLQV…AALD. A glycan (N-linked (GlcNAc...) asparagine) is linked at asparagine 119. Residues 190 to 245 form the LRRCT domain; that stretch reads NPWLCDCDFAHLFSWIQENTSKLPKGLDAIQCSLPMEDRRVALRELSEASFSECKF. 2 disulfide bridges follow: cysteine 194–cysteine 221 and cysteine 196–cysteine 243. Residues 252-272 traverse the membrane as a helical segment; the sequence is LFIIIFSGVAVSIAAIISSFF. Topologically, residues 273-298 are cytoplasmic; it reads LATVVQCFQRCAPNKDTEDEDDDEDD.

In terms of assembly, interacts with KCNMA1.

It localises to the cell membrane. Auxiliary protein of the large-conductance, voltage and calcium-activated potassium channel (BK alpha). Modulates gating properties by producing a marked shift in the BK channel's voltage dependence of activation in the hyperpolarizing direction, and in the absence of calcium. The polypeptide is Leucine-rich repeat-containing protein 38 (Lrrc38) (Mus musculus (Mouse)).